Reading from the N-terminus, the 874-residue chain is Probable inorganic carbon transporter subunit DabA (874 aa).

Residues Cys-398, Asp-400, His-580, and Cys-595 each contribute to the Zn(2+) site.

Belongs to the inorganic carbon transporter (TC 9.A.2) DabA family. As to quaternary structure, forms a complex with DabB. The cofactor is Zn(2+).

Its subcellular location is the cell membrane. Its function is as follows. Part of an energy-coupled inorganic carbon pump. The sequence is that of Probable inorganic carbon transporter subunit DabA from Bacillus cereus (strain ZK / E33L).